Consider the following 299-residue polypeptide: Putative peptidyl-prolyl cis-trans isomerase jhp_0161 (299 aa).

A signal peptide spans 1–21 (MKKNILNLALVGALSASFLMA). Residues 154 to 253 (KQEAHARHIL…FGYHIIYLIS (100 aa)) form the PpiC domain.

It catalyses the reaction [protein]-peptidylproline (omega=180) = [protein]-peptidylproline (omega=0). This chain is Putative peptidyl-prolyl cis-trans isomerase jhp_0161, found in Helicobacter pylori (strain J99 / ATCC 700824) (Campylobacter pylori J99).